Consider the following 732-residue polypeptide: Inducible ornithine decarboxylase (732 aa).

An N6-(pyridoxal phosphate)lysine modification is found at Lys355.

It belongs to the Orn/Lys/Arg decarboxylase class-I family. The cofactor is pyridoxal 5'-phosphate.

It carries out the reaction L-ornithine + H(+) = putrescine + CO2. It functions in the pathway amine and polyamine biosynthesis; putrescine biosynthesis via L-ornithine pathway; putrescine from L-ornithine: step 1/1. Functionally, the first enzyme leading to putrescine and thus polyamine synthesis. This Escherichia coli (strain K12) protein is Inducible ornithine decarboxylase.